The sequence spans 538 residues: Acetylcholine receptor subunit alpha-type acr-7 (538 aa).

The signal sequence occupies residues 1-27 (MMVQSIQIVLPVALFFLIVFNGFTVEG). Residues 28–250 (SKKEAQLYRD…LHLRRRTFYY (223 aa)) are Extracellular-facing. 2 N-linked (GlcNAc...) asparagine glycosylation sites follow: Asn-41 and Asn-101. 2 disulfides stabilise this stretch: Cys-160/Cys-174 and Cys-229/Cys-230. A run of 3 helical transmembrane segments spans residues 251-271 (VFNVVLPTLLVSFMSLLAFCL), 280-300 (IGLQTTILLSVCFFLTILSEM), and 313-333 (VFFSALTFIVAMSTTFTILVL). Topologically, residues 334-513 (NIRYRQITNH…FAAQAVDRFC (180 aa)) are cytoplasmic. A helical transmembrane segment spans residues 514–534 (LIIFTIVFIICCFIFVAIPPI).

The protein belongs to the ligand-gated ion channel (TC 1.A.9) family. Acetylcholine receptor (TC 1.A.9.1) subfamily. As to quaternary structure, forms a homooligomeric channel blocked by alpha-bungarotoxin. The structure is probably pentameric.

Its subcellular location is the postsynaptic cell membrane. The protein localises to the cell membrane. Its function is as follows. After binding acetylcholine, the AChR responds by an extensive change in conformation that affects all subunits and leads to opening of an ion-conducting channel across the plasma membrane. This chain is Acetylcholine receptor subunit alpha-type acr-7 (acr-7), found in Caenorhabditis elegans.